The sequence spans 295 residues: Indole-3-glycerol phosphate synthase (295 aa).

It belongs to the TrpC family.

The enzyme catalyses 1-(2-carboxyphenylamino)-1-deoxy-D-ribulose 5-phosphate + H(+) = (1S,2R)-1-C-(indol-3-yl)glycerol 3-phosphate + CO2 + H2O. The protein operates within amino-acid biosynthesis; L-tryptophan biosynthesis; L-tryptophan from chorismate: step 4/5. The chain is Indole-3-glycerol phosphate synthase from Prochlorococcus marinus (strain AS9601).